Reading from the N-terminus, the 61-residue chain is Small ribosomal subunit protein uS14 (61 aa).

Residues Cys-24, Cys-27, Cys-40, and Cys-43 each contribute to the Zn(2+) site.

The protein belongs to the universal ribosomal protein uS14 family. Zinc-binding uS14 subfamily. As to quaternary structure, part of the 30S ribosomal subunit. Contacts proteins S3 and S10. The cofactor is Zn(2+).

Functionally, binds 16S rRNA, required for the assembly of 30S particles and may also be responsible for determining the conformation of the 16S rRNA at the A site. In Mycoplasma mobile (strain ATCC 43663 / 163K / NCTC 11711) (Mesomycoplasma mobile), this protein is Small ribosomal subunit protein uS14.